A 206-amino-acid chain; its full sequence is NADH-quinone oxidoreductase subunit C (206 aa).

This sequence belongs to the complex I 30 kDa subunit family. NDH-1 is composed of 14 different subunits. Subunits NuoB, C, D, E, F, and G constitute the peripheral sector of the complex.

Its subcellular location is the cell inner membrane. It catalyses the reaction a quinone + NADH + 5 H(+)(in) = a quinol + NAD(+) + 4 H(+)(out). NDH-1 shuttles electrons from NADH, via FMN and iron-sulfur (Fe-S) centers, to quinones in the respiratory chain. The immediate electron acceptor for the enzyme in this species is believed to be ubiquinone. Couples the redox reaction to proton translocation (for every two electrons transferred, four hydrogen ions are translocated across the cytoplasmic membrane), and thus conserves the redox energy in a proton gradient. The protein is NADH-quinone oxidoreductase subunit C of Nitrosomonas europaea (strain ATCC 19718 / CIP 103999 / KCTC 2705 / NBRC 14298).